We begin with the raw amino-acid sequence, 227 residues long: 7-cyano-7-deazaguanine synthase (227 aa).

ATP is bound at residue 7 to 17 (LSGGMDSLVTT). Cys187, Cys195, Cys198, and Cys201 together coordinate Zn(2+).

It belongs to the QueC family. The cofactor is Zn(2+).

It catalyses the reaction 7-carboxy-7-deazaguanine + NH4(+) + ATP = 7-cyano-7-deazaguanine + ADP + phosphate + H2O + H(+). It functions in the pathway purine metabolism; 7-cyano-7-deazaguanine biosynthesis. Catalyzes the ATP-dependent conversion of 7-carboxy-7-deazaguanine (CDG) to 7-cyano-7-deazaguanine (preQ(0)). The chain is 7-cyano-7-deazaguanine synthase from Chlorobium phaeovibrioides (strain DSM 265 / 1930) (Prosthecochloris vibrioformis (strain DSM 265)).